The following is a 277-amino-acid chain: Large ribosomal subunit protein uL2 (277 aa).

The interval 219–277 (TVRGSVMNPNDHPHGGGEGKAPVGRKAPSTPWGKPALGLKTRNKKAKSDKLIVRRRNEK) is disordered. Residues 264–277 (AKSDKLIVRRRNEK) show a composition bias toward basic and acidic residues.

It belongs to the universal ribosomal protein uL2 family. Part of the 50S ribosomal subunit. Forms a bridge to the 30S subunit in the 70S ribosome.

In terms of biological role, one of the primary rRNA binding proteins. Required for association of the 30S and 50S subunits to form the 70S ribosome, for tRNA binding and peptide bond formation. It has been suggested to have peptidyltransferase activity; this is somewhat controversial. Makes several contacts with the 16S rRNA in the 70S ribosome. This is Large ribosomal subunit protein uL2 from Streptococcus pneumoniae serotype 2 (strain D39 / NCTC 7466).